The chain runs to 922 residues: 1,4-alpha-glucan-branching enzyme 1, chloroplastic/amyloplastic (922 aa).

The N-terminal 47 residues, 1–47, are a transit peptide targeting the chloroplast; the sequence is MVYTISGIRFPVLPSLHKSTLRCDRRASSHSFFLKNNSSSFSRTSLY. A disordered region spans residues 83–130; sequence LENPDITSEDAQNLEDLTMKDGNKYNIDESTSSYREVGDEKGSVTSSS. Residues 99–109 are compositionally biased toward basic and acidic residues; it reads LTMKDGNKYNI. D494 acts as the Nucleophile in catalysis. Residue E549 is the Proton donor of the active site. The disordered stretch occupies residues 870–922; sequence VESEPIELSVEEAESEPIERSVEEVESETTQQSVEVESETTQQSVEVESETTQ. Residues 897 to 922 show a composition bias toward low complexity; the sequence is ETTQQSVEVESETTQQSVEVESETTQ.

Belongs to the glycosyl hydrolase 13 family. GlgB subfamily. Monomer. As to expression, expressed in roots, leaves, stipules, pods and flowers.

It localises to the plastid. Its subcellular location is the chloroplast. It is found in the amyloplast. The catalysed reaction is Transfers a segment of a (1-&gt;4)-alpha-D-glucan chain to a primary hydroxy group in a similar glucan chain.. Its pathway is glycan biosynthesis; starch biosynthesis. In terms of biological role, catalyzes the formation of the alpha-1,6-glucosidic linkages in starch by scission of a 1,4-alpha-linked oligosaccharide from growing alpha-1,4-glucan chains and the subsequent attachment of the oligosaccharide to the alpha-1,6 position. May preferentially transfer short chains during branching. Responsible for the synthesis of about 75% of the amylopectin found in the starch granules of mature embryos. The protein is 1,4-alpha-glucan-branching enzyme 1, chloroplastic/amyloplastic (SBEI) of Pisum sativum (Garden pea).